We begin with the raw amino-acid sequence, 305 residues long: Homeobox protein ceh-23 (305 aa).

Disordered stretches follow at residues 113 to 140 and 262 to 305; these read ASCPEPPASSQATVTLQVPSTGSPERRR and RRSK…KVLN. Polar residues predominate over residues 120–135; that stretch reads ASSQATVTLQVPSTGS. Residues 211-270 constitute a DNA-binding region (homeobox); it reads HRKARTIYGTTQTQQLEDMFKGQMYVVGAERENLAQRLGLSPSQVRIWFQNRRSKHRRKQ. A compositionally biased stretch (acidic residues) spans 287 to 305; it reads GKDEEEDDEEDEDDVKVLN.

Belongs to the distal-less homeobox family.

It localises to the nucleus. Probable transcription factor. Required for differentiation of AIY interneurons, acting downstream of LIM/homeobox protein ttx-3. Modulates gene expression, acting downstream of AMP kinase aak-2/AMPK signaling. Modulates lifespan. In Caenorhabditis elegans, this protein is Homeobox protein ceh-23 (ceh-23).